The chain runs to 457 residues: Argininosuccinate lyase (457 aa).

The protein belongs to the lyase 1 family. Argininosuccinate lyase subfamily.

The protein resides in the cytoplasm. The enzyme catalyses 2-(N(omega)-L-arginino)succinate = fumarate + L-arginine. Its pathway is amino-acid biosynthesis; L-arginine biosynthesis; L-arginine from L-ornithine and carbamoyl phosphate: step 3/3. This Serratia proteamaculans (strain 568) protein is Argininosuccinate lyase.